A 660-amino-acid polypeptide reads, in one-letter code: Probable Xaa-Pro aminopeptidase PTRG_10574 (660 aa).

The Mn(2+) site is built by D274, D285, E435, and E476. Residues 641 to 660 (SAGSGSTPLWKPHNKQDKKN) form a disordered region.

This sequence belongs to the peptidase M24B family. It depends on Mn(2+) as a cofactor.

The enzyme catalyses Release of any N-terminal amino acid, including proline, that is linked to proline, even from a dipeptide or tripeptide.. Its function is as follows. Catalyzes the removal of a penultimate prolyl residue from the N-termini of peptides. This Pyrenophora tritici-repentis (strain Pt-1C-BFP) (Wheat tan spot fungus) protein is Probable Xaa-Pro aminopeptidase PTRG_10574.